Here is a 138-residue protein sequence, read N- to C-terminus: MLTDPIADMLTRIRNATRVYKESTDVPASRFKEEILRILAREGFIKGYERVDVDGKPYLRVYLKYGPRRQGPDPRPEQVIHHIRRISKPGRRVYVGVKEIPRVRRGLGIAILSTSKGVLTDREARKLGVGGELICEVW.

This sequence belongs to the universal ribosomal protein uS8 family. In terms of assembly, part of the 30S ribosomal subunit. Contacts proteins S5 and S12.

In terms of biological role, one of the primary rRNA binding proteins, it binds directly to 16S rRNA central domain where it helps coordinate assembly of the platform of the 30S subunit. In Thermus thermophilus (strain ATCC BAA-163 / DSM 7039 / HB27), this protein is Small ribosomal subunit protein uS8 (rpsH).